The following is a 103-amino-acid chain: Flagellar hook-basal body complex protein FliE (103 aa).

This sequence belongs to the FliE family.

The protein resides in the bacterial flagellum basal body. This chain is Flagellar hook-basal body complex protein FliE, found in Yersinia enterocolitica serotype O:8 / biotype 1B (strain NCTC 13174 / 8081).